The sequence spans 139 residues: Protein shisa-5 (139 aa).

The chain crosses the membrane as a helical span at residues 3-23; that stretch reads FGTLVAIGVIVFAVVVITIIL.

It belongs to the shisa family.

Its subcellular location is the endoplasmic reticulum membrane. The protein resides in the nucleus membrane. Its function is as follows. Can induce apoptosis in a caspase-dependent manner and plays a role in p53/TP53-dependent apoptosis. In Gallus gallus (Chicken), this protein is Protein shisa-5 (Shisa5).